The following is a 431-amino-acid chain: Serine/threonine-protein kinase SSN3 (431 aa).

Positions 27–355 constitute a Protein kinase domain; sequence YQIIGYIAAG…ADNALVHPYF (329 aa). ATP is bound by residues 33 to 41 and K59; that span reads IAAGTYGKV. Catalysis depends on D174, which acts as the Proton acceptor. The disordered stretch occupies residues 397 to 431; sequence RHGGAYDDQHNNSNNNTNNSLNANNANNVPRKRAR. Residues 407–424 are compositionally biased toward low complexity; sequence NNSNNNTNNSLNANNANN.

Belongs to the protein kinase superfamily. CMGC Ser/Thr protein kinase family. CDC2/CDKX subfamily. Component of the srb8-11 complex, a regulatory module of the Mediator complex. The cofactor is Mg(2+).

It localises to the nucleus. It carries out the reaction L-seryl-[protein] + ATP = O-phospho-L-seryl-[protein] + ADP + H(+). The enzyme catalyses L-threonyl-[protein] + ATP = O-phospho-L-threonyl-[protein] + ADP + H(+). It catalyses the reaction [DNA-directed RNA polymerase] + ATP = phospho-[DNA-directed RNA polymerase] + ADP + H(+). Its function is as follows. Component of the srb8-11 complex. The srb8-11 complex is a regulatory module of the Mediator complex which is itself dependent transcription. The srb8-11 complex may be involved in the transcriptional repression of a subset of genes regulated by Mediator. It may inhibit the association of the Mediator complex with RNA polymerase II to form the holoenzyme complex. The srb8-11 complex phosphorylates the C-terminal domain (CTD) of the largest subunit of RNA polymerase II. The polypeptide is Serine/threonine-protein kinase SSN3 (SSN3) (Scheffersomyces stipitis (strain ATCC 58785 / CBS 6054 / NBRC 10063 / NRRL Y-11545) (Yeast)).